The following is a 947-amino-acid chain: MEDDTPDVSSDSNGDAAYSDYFLDYKSIMDEITITTQPKSGYVIRNKPLRLQCRANHATKIRYKCSSKWIDDSRIEKLIGTDSTSGVGYIDASVDISRIDVDTSGHVDAFQCQCYASGDDDQDVVASDVATVHLAYMRKHFLKSPVAQRVQEGTTLQLPCQAPESDPKAELTWYKDGVVVQPDANVIRASDGSLIMSAARLSDSGNYTCEATNVANSRKTDPVEVQIYVDGGWSEWSPWIGTCHVDCPLLRQHAHRIRDPHDVLPHQRRTRTCNNPAPLNDGEYCKGEEEMTRSCKVPCKLDGGWSSWSDWSACSSSCHRYRTRACTVPPPMNGGQPCFGDDLMTQECPAQLCTADSSRIVISDTAVYGSVASIFIVASFILAILAMFCCKRGNSKKSKPLKPQKMNSEKAGGIYYSEPPGVRRLLLEHQHGTLLGEKISSCSQYFEPPPLPHSTTLRSGKSAFSGYSSTRNAGSRAALIQECSSSSSGSGGKRTMLRTSSSNCSDDDNYATLYDYMEDKSVLGLDTSQNIVAAQIDSNGARLSLSKSGARLIVPELAVEGEKMLYLAVSDTLTDQPHLKPIESALSPVIVIGQCDVSMSAHDNILRRPVVVSFRHCASTFPRDNWQFTLYADEGSGWQKAVTIGEENLNTNMFVQFEQPGKKNDGFGWCHVMTYSLARLMLAGHPRRNSLSAAKRVHLAVFGPTEMSAYRRPFELRVYCVPETGAAMESVWKQEDGSRLLCESNDFILNEKGNLCICIEDVIPGFSCDGPEVVEISETQHRFVAQNGLHCSLKFRPKEINGSQFSTRVIVYQKASSTEPMVMEVSNEPELYDATSEEREKGSVCVEFRLPFGVKDELARLLDMPNESHSDWRGLAKKLHYDRYLQFFASFPDCSPTSLLLDLWEASSSGSARAVPDLLQTLRVMGRPDAVMVLERFLSAFPQIVSP.

The 99-residue stretch at 43-141 folds into the Ig-like domain; that stretch reads VIRNKPLRLQ…VHLAYMRKHF (99 aa). 5 disulfide bridges follow: Cys-53–Cys-112, Cys-160–Cys-209, Cys-243–Cys-295, Cys-247–Cys-299, and Cys-273–Cys-285. Positions 139–226 constitute an Ig-like C2-type domain; sequence KHFLKSPVAQ…SRKTDPVEVQ (88 aa). A glycan (N-linked (GlcNAc...) asparagine) is linked at Asn-206. TSP type-1 domains follow at residues 230 to 300 and 302 to 354; these read DGGW…VPCK and DGGW…QLCT. C-linked (Man) tryptophan glycans are attached at residues Trp-305 and Trp-308. Residues 369 to 389 traverse the membrane as a helical segment; the sequence is GSVASIFIVASFILAILAMFC. The Cytoplasmic segment spans residues 390-947; sequence CKRGNSKKSK…LSAFPQIVSP (558 aa). Tyr-510 carries the post-translational modification Phosphotyrosine. The 129-residue stretch at 530 to 658 folds into the ZU5 domain; the sequence is NIVAAQIDSN…LNTNMFVQFE (129 aa). One can recognise a Death domain in the interval 857–938; the sequence is ELARLLDMPN…DAVMVLERFL (82 aa).

This sequence belongs to the unc-5 family. As to quaternary structure, interacts (via cytoplasmic domain) with src-1 (via SH2 domain and SH3 domain). Interacts with madd-4. Interacts with unc-129; the interaction is direct. In terms of processing, phosphorylated on different cytoplasmic tyrosine residues. May be phosphorylated on tyrosine residues by src-1. Tyrosine phosphorylation is unc-6-dependent. Glycosylated via C-mannosylation by dpy-19 at Trp-305 and Trp-308. Expressed in cell bodies and axons of the VNC motor neurons that extend axons to the dorsal midline and within the ventral nerve cord. Expressed in gonadal distal tip cells (DTC).

It localises to the cell membrane. The protein localises to the membrane raft. It is found in the cell projection. Its subcellular location is the neuron projection. Its function is as follows. Receptor for netrin (unc-6) required for axon guidance. Mediates axon repulsion of neuronal growth cones in the developing nervous system upon ligand binding. Axon migration is mediated by the secreted unc-6, which promotes attraction of neurons and axons through binding to the unc-40 receptor, while repulsion requires both unc-5 and unc-40 receptors. Involved in the ventral-dorsal and anterior-posterior migration of distal tip cells along the body, which may be mediated by Wnt receptor mom-5, ced-10/Rac, ced-12/ELMO and mig-2/RhoG. This is Netrin receptor unc-5 from Caenorhabditis elegans.